We begin with the raw amino-acid sequence, 435 residues long: GTPase Obg (435 aa).

Residues 1-159 (MAFIDKCKIV…VEVLLELKTI (159 aa)) enclose the Obg domain. In terms of domain architecture, OBG-type G spans 160 to 329 (ADIGIIGLPN…MLDDVIKIYF (170 aa)). GTP contacts are provided by residues 166–173 (GLPNAGKS), 191–195 (FTTLN), 212–215 (DIPG), 282–285 (NKID), and 310–312 (SAL). The Mg(2+) site is built by serine 173 and threonine 193. An OCT domain is found at 357-435 (KSKELDKTIE…IYDITLEFEE (79 aa)).

The protein belongs to the TRAFAC class OBG-HflX-like GTPase superfamily. OBG GTPase family. In terms of assembly, monomer. Mg(2+) is required as a cofactor.

It is found in the cytoplasm. Functionally, an essential GTPase which binds GTP, GDP and possibly (p)ppGpp with moderate affinity, with high nucleotide exchange rates and a fairly low GTP hydrolysis rate. Plays a role in control of the cell cycle, stress response, ribosome biogenesis and in those bacteria that undergo differentiation, in morphogenesis control. This is GTPase Obg from Ureaplasma parvum serovar 3 (strain ATCC 27815 / 27 / NCTC 11736).